Consider the following 455-residue polypeptide: DENN domain-containing protein 11 (455 aa).

The tract at residues Met1 to Glu59 is disordered. Residue Val2 is modified to N-acetylvaline. In terms of domain architecture, uDENN spans Glu15–His187. At Arg41 the chain carries Omega-N-methylarginine. A cDENN domain is found at Trp214 to Arg362. The dDENN domain maps to Leu364–Pro455.

The protein belongs to the DENND11 family.

Probable guanine nucleotide exchange factor (GEF). May promote the exchange of GDP to GTP, converting inactive GDP-bound small GTPases into their active GTP-bound form. May play a role in neuritogenesis, as well as in neuronal recovery and/or restructuring in the hippocampus following transient cerebral ischemia. The polypeptide is DENN domain-containing protein 11 (Dennd11) (Mus musculus (Mouse)).